Here is a 1529-residue protein sequence, read N- to C-terminus: Ras guanine nucleotide exchange factor B (1529 aa).

Residues 135 to 186 (ISNIEKQLSNLVNLKSNTTEQTDRKYKTNLIDFKESIIQLEKDCKNLLKQSN) adopt a coiled-coil conformation. Disordered regions lie at residues 290–357 (INTL…ISIN), 576–600 (TTTT…KSSH), 680–724 (KRNT…HIQQ), 847–948 (MGKE…NHNR), and 1168–1206 (QPPQ…STNL). 3 stretches are compositionally biased toward low complexity: residues 576–591 (TTTT…TTTN), 683–724 (TSSG…HIQQ), and 853–887 (NSNT…NNNE). 2 coiled-coil regions span residues 722 to 798 (IQQI…LNRK) and 871 to 898 (NNNN…ETNK). Basic and acidic residues predominate over residues 888-898 (NKNENKNETNK). 4 stretches are compositionally biased toward low complexity: residues 906–916 (SSTSTLSSSTT), 924–940 (SSTN…LLPP), 1168–1187 (QPPQ…TTQP), and 1197–1206 (QPQLQQSTNL). An N-terminal Ras-GEF domain is found at 1075-1205 (FYRSIKYASL…PQPQLQQSTN (131 aa)). One can recognise a Ras-GEF domain in the interval 1282-1517 (SSTDIAEQLT…YEQSILLEPK (236 aa)).

The protein resides in the cytoplasm. Promotes the exchange of Ras-bound GDP by GTP. Involved in phagocytosis, fluid-phase endocytosis, regulation of macropinocytosis and control of cell movement. The polypeptide is Ras guanine nucleotide exchange factor B (gefB) (Dictyostelium discoideum (Social amoeba)).